The primary structure comprises 416 residues: Phakinin (416 aa).

Residues 1–48 (MSKRRVAADLPSGTNSSMPVQRHRVSSLRGTHSPSSLDSPPASRTSAV) form a disordered region. The residue at position 2 (S2) is an N-acetylserine. The head stretch occupies residues 2–115 (SKRRVAADLP…HTTVEDLGGC (114 aa)). 4 positions are modified to phosphoserine: S27, S33, S36, and S91. A compositionally biased stretch (polar residues) spans 28–48 (LRGTHSPSSLDSPPASRTSAV). One can recognise an IF rod domain in the interval 105 to 416 (DHTTVEDLGG…HALLDREENN (312 aa)). 3 coiled-coil regions span residues 116 to 146 (LVEYMTKVHALEQVSQELETQLRAHLESKAK), 170 to 249 (LENA…VKVL), and 308 to 402 (QTQE…LQKD). The tract at residues 397–416 (SQLQKDVASYHALLDREENN) is tail.

It belongs to the intermediate filament family. In terms of assembly, part of a complex required for lens intermediate filament formation composed of BFSP1, BFSP2 and CRYAA. Found in a complex composed of PPL (via C-terminal linker domain), BFSP1 and BFSP2 in the retinal lens. Within the complex interacts with PPL (via C-terminal linker domain) and with BFSP1. Identified in a complex that contains VIM, EZR, AHNAK, BFSP1, BFSP2, ANK2, PLEC, PRX and spectrin. Interacts with LGSN. Interacts with VIM. As to expression, detected in retina lens fiber cells (at protein level). Also expressed in the lens epithelium, abundantly expressed in the anterior and anterolateral epithelium, less frequently expressed nearer the lens coronal equator (at protein level).

It is found in the cell membrane. It localises to the cytoplasm. The protein resides in the cytoskeleton. Its subcellular location is the cell cortex. Its function is as follows. Required for the correct formation of lens intermediate filaments as part of a complex composed of BFSP1, BFSP2 and CRYAA. Plays a role in maintenance of retinal lens optical clarity. In Mus musculus (Mouse), this protein is Phakinin (Bfsp2).